The chain runs to 1192 residues: Probable ATP-dependent RNA helicase kurz (1192 aa).

The disordered stretch occupies residues 170–214 (ELQAKRKNPNVISVEEDDEDSSSSDEDDEEAPAQSAPIAIPTPVS). Residues 183 to 200 (VEEDDEDSSSSDEDDEEA) show a composition bias toward acidic residues. In terms of domain architecture, Helicase ATP-binding spans 270–436 (METINENPIV…TRLFKIPPPL (167 aa)). Residue 283–290 (GETGSGKT) participates in ATP binding. The DEAH box signature appears at 379–382 (DEAH). The interval 504 to 529 (APTKDVAKNGKVSEEEKEETIDDAAS) is disordered. The span at 505 to 517 (PTKDVAKNGKVSE) shows a compositional bias: basic and acidic residues. The residue at position 529 (Ser-529) is a Phosphoserine. A Phosphothreonine modification is found at Thr-530. Positions 540 to 746 (DMKRVIRNIR…DLMLQMRCMG (207 aa)) constitute a Helicase C-terminal domain. Basic and acidic residues predominate over residues 567-583 (DDYKLPGDDTEADMHEQ). Residues 567–612 (DDYKLPGDDTEADMHEQPDEDDEQEGLEEDNDDELGLEDESGMGSG) are disordered. Residues 584-607 (PDEDDEQEGLEEDNDDELGLEDES) are compositionally biased toward acidic residues.

This sequence belongs to the DEAD box helicase family. DEAH subfamily.

It catalyses the reaction ATP + H2O = ADP + phosphate + H(+). This is Probable ATP-dependent RNA helicase kurz (kz) from Drosophila melanogaster (Fruit fly).